Here is a 108-residue protein sequence, read N- to C-terminus: Parvalbumin beta (108 aa).

EF-hand domains follow at residues lysine 38–threonine 73 and leucine 77–alanine 108. The Ca(2+) site is built by aspartate 51, aspartate 53, serine 55, phenylalanine 57, glutamate 59, glutamate 62, aspartate 90, aspartate 92, aspartate 94, lysine 96, and glutamate 101.

Belongs to the parvalbumin family.

Its function is as follows. In muscle, parvalbumin is thought to be involved in relaxation after contraction. It binds two calcium ions. The sequence is that of Parvalbumin beta from Graptemys geographica (Common map turtle).